Reading from the N-terminus, the 550-residue chain is Glutamine--tRNA ligase (550 aa).

The 'HIGH' region motif lies at 34–44; sequence PEPNGYLHLGH. Residues 35–37 and 41–47 contribute to the ATP site; these read EPN and HLGHAKS. L-glutamine contacts are provided by Asp67 and Tyr212. Residues Thr231, 261-262, and 269-271 each bind ATP; these read RL and LSK. Residues 268–272 carry the 'KMSKS' region motif; sequence VLSKR.

The protein belongs to the class-I aminoacyl-tRNA synthetase family. As to quaternary structure, monomer.

It is found in the cytoplasm. The enzyme catalyses tRNA(Gln) + L-glutamine + ATP = L-glutaminyl-tRNA(Gln) + AMP + diphosphate. This chain is Glutamine--tRNA ligase, found in Buchnera aphidicola subsp. Baizongia pistaciae (strain Bp).